The following is a 752-amino-acid chain: Complement C2 (752 aa).

The signal sequence occupies residues 1–20; it reads MGPLMVLFCLLFVYTGLADS. 3 Sushi domains span residues 22–86, 87–146, and 149–206; these read PSCP…VCKP, VRCP…VCDN, and GHCP…ICRQ. Intrachain disulfides connect Cys24–Cys64, Cys51–Cys84, Cys89–Cys131, Cys117–Cys144, Cys151–Cys191, and Cys177–Cys204. Asn29 carries an N-linked (GlcNAc...) asparagine glycan. The N-linked (GlcNAc...) asparagine glycan is linked to Asn112. The VWFA domain occupies 254–452; that stretch reads NLYLLLDCSQ…KALHQVFEHM (199 aa). An MIDAS-like motif motif is present at residues 260 to 264; sequence DCSQS. 2 residues coordinate Mg(2+): Ser262 and Ser264. 2 N-linked (GlcNAc...) asparagine glycosylation sites follow: Asn290 and Asn333. Thr337 is a binding site for Mg(2+). Cystine bridges form between Cys463–Cys581, Cys492–Cys508, and Cys584–Cys600. Residues 464–744 form the Peptidase S1 domain; the sequence is GVGNMSANAS…MQPWLRQHLG (281 aa). N-linked (GlcNAc...) asparagine glycosylation is found at Asn467 and Asn471. Active-site charge relay system residues include His507 and Asp561. 2 N-linked (GlcNAc...) asparagine glycosylation sites follow: Asn621 and Asn651. Disulfide bonds link Cys638–Cys665 and Cys675–Cys705. Residue Ser679 is the Charge relay system of the active site.

Belongs to the peptidase S1 family. Serine protease component of the C3 convertase, also named C4bC2b, composed of the serine protease complement C2b and complement C4b. Serine protease component of the C5 convertase, also named C4bC2bC3b, composed of the serine protease complement C2b, complement C3b, as well as complement C4b. Requires Mg(2+) as cofactor. The cofactor is Mn(2+). Post-translationally, cleaved and activated by different proteases depending on the complement pathway to generate complement C2a and serine protease complement C2b chains. Cleaved and activated by C1S following activation by the classical complement system. Cleaved and activated by MASP2 following activation by the lectin complement system. Cleaved and activated by GZMK following activation by the GZMK complement system.

Its subcellular location is the secreted. The protein localises to the cell surface. The catalysed reaction is Selective cleavage of Arg-|-Ser bond in complement component C3 alpha-chain to form C3a and C3b, and Arg-|-Xaa bond in complement component C5 alpha-chain to form C5a and C5b.. Functionally, precursor of the catalytic component of the C3 and C5 convertase complexes, which are part of the complement pathway, a cascade of proteins that leads to phagocytosis and breakdown of pathogens and signaling that strengthens the adaptive immune system. Component C2 is part of the classical, lectin and GZMK complement systems. In terms of biological role, catalytic component of the complement C3 and C5 convertase complexes. Following complement activation, recruited to the surface of pathogens by complement C4b opsonin to form the C3 convertase, or C3b and C4b opsonins to form the C5 convertase. As part of the C3 convertase, cleaves and activate C3 into C3a anaphylatoxin and C3b opsonin, the next components of the complement pathways. As part of the C5 convertase, cleaves and activate C5 into C5a anaphylatoxin and C5b component of the membrane attack complex. The sequence is that of Complement C2 from Gorilla gorilla gorilla (Western lowland gorilla).